A 242-amino-acid chain; its full sequence is Methylthioribulose-1-phosphate dehydratase (242 aa).

Residues 1–11 (MAQEIQKENND) show a composition bias toward basic and acidic residues. Residues 1 to 20 (MAQEIQKENNDHLVQSSDPE) form a disordered region. C100 is a binding site for substrate. The Zn(2+) site is built by H117 and H119. E146 serves as the catalytic Proton donor/acceptor. H202 is a Zn(2+) binding site.

Belongs to the aldolase class II family. MtnB subfamily. Zn(2+) is required as a cofactor.

The protein resides in the cytoplasm. It catalyses the reaction 5-(methylsulfanyl)-D-ribulose 1-phosphate = 5-methylsulfanyl-2,3-dioxopentyl phosphate + H2O. Its pathway is amino-acid biosynthesis; L-methionine biosynthesis via salvage pathway; L-methionine from S-methyl-5-thio-alpha-D-ribose 1-phosphate: step 2/6. Catalyzes the dehydration of methylthioribulose-1-phosphate (MTRu-1-P) into 2,3-diketo-5-methylthiopentyl-1-phosphate (DK-MTP-1-P). The polypeptide is Methylthioribulose-1-phosphate dehydratase (Aspergillus niger (strain ATCC MYA-4892 / CBS 513.88 / FGSC A1513)).